A 78-amino-acid polypeptide reads, in one-letter code: Gas vesicle protein A (78 aa).

An alpha helix 1 region spans residues 9–19 (LAEVLDRVLDK). The segment at 23–31 (VDVWARISL) is beta-strand 1. The tract at residues 32-34 (VGI) is beta turn. The segment at 35-43 (EILTVEARV) is beta-strand 2. An alpha helix 2 region spans residues 48–67 (VDTFLHYAEEIAKIEQAELT).

It belongs to the gas vesicle GvpA family. The gas vesicle shell is 2 nm thick and consists of a single layer of this protein. It forms helical ribs nearly perpendicular to the long axis of the vesicle. Modeled as antiparallel homodimers.

The protein localises to the gas vesicle shell. Gas vesicles are hollow, gas filled proteinaceous nanostructures found in some microorganisms. During planktonic growth they allow positioning of the organism at a favorable depth for light or nutrient acquisition. GvpA forms the protein shell. This gene replaces p-gvpA of H.salinarum very poorly, only about 1% of GVs are formed; the few gas vesicles formed are quite strong with a very high critical collapse pressure (CCP) of 0.213 MPa. Functionally, expression of a 9.5 kb mc-vac DNA fragment containing 2 divergently transcribed regions (gvpD-gvpE-gvpF-gvpG-gvpH-gvpI-gvpJ-gvpK-gvpL-gvpM and gvpA-gvpC-gvpN-gvpO) allows H.volcanii to produce gas vesicles. The polypeptide is Gas vesicle protein A (Haloferax mediterranei (strain ATCC 33500 / DSM 1411 / JCM 8866 / NBRC 14739 / NCIMB 2177 / R-4) (Halobacterium mediterranei)).